Here is a 354-residue protein sequence, read N- to C-terminus: MNGTEGPYFYVPMVNTTGIVRSPYEYPQYYLVSPAAYACLGAYMFFLILVGFPINFLTLYVTIEHKKLRTPLNYILLNLAVADLFMVFGGFTTTIYTSMHGYFVLGRLGCNLEGYFATLGGEIGLWSLVVLAVERWLVVCKPISNFRFSENHAIMGLVFTWIMANSCAAPPLLGWSRYIPEGMQCSCGVDYYTRAEGFNNESFVIYMFICHFCIPLIVVFFCYGRLLCAVKEAAAAQQESETTQRAEREVTRMVVIMVIGFLVCWIPYASVAWYIFTHQGSEFGPLFMTVPAFFAKSASIYNPLIYICMNKQFRHCMITTLCCGKNPFEEEEGASTTASKTEASSVSSSSVSPA.

The Extracellular portion of the chain corresponds to Met-1–Ala-36. Asn-2 and Asn-15 each carry an N-linked (GlcNAc...) asparagine glycan. A helical transmembrane segment spans residues Tyr-37–Val-61. At Thr-62–Asn-73 the chain is on the cytoplasmic side. Residues Tyr-74–Tyr-96 traverse the membrane as a helical segment. The Extracellular segment spans residues Thr-97–Cys-110. The cysteines at positions 110 and 187 are disulfide-linked. Residues Asn-111–Val-133 traverse the membrane as a helical segment. A 'Ionic lock' involved in activated form stabilization motif is present at residues Glu-134 to Trp-136. Topologically, residues Glu-134–His-152 are cytoplasmic. The chain crosses the membrane as a helical span at residues Ala-153–Leu-173. At Gly-174–Ser-202 the chain is on the extracellular side. The helical transmembrane segment at Phe-203–Gly-224 threads the bilayer. The Cytoplasmic segment spans residues Arg-225–Arg-252. Residues Met-253–Tyr-274 form a helical membrane-spanning segment. Residues Ile-275–Leu-286 are Extracellular-facing. The chain crosses the membrane as a helical span at residues Phe-287 to Cys-308. At Lys-296 the chain carries N6-(retinylidene)lysine. Residues Met-309–Ala-354 are Cytoplasmic-facing. Residues Cys-322 and Cys-323 are each lipidated (S-palmitoyl cysteine). The segment at Gly-333 to Ala-354 is disordered. The span at Ala-334–Ala-354 shows a compositional bias: low complexity.

This sequence belongs to the G-protein coupled receptor 1 family. Opsin subfamily. Phosphorylated on some or all of the serine and threonine residues present in the C-terminal region. Post-translationally, contains one covalently linked retinal chromophore.

The protein localises to the membrane. The protein resides in the cell projection. It is found in the cilium. Its subcellular location is the photoreceptor outer segment. In terms of biological role, photoreceptor required for image-forming vision at low light intensity. While most salt water fish species use retinal as chromophore, most freshwater fish use 3-dehydroretinal, or a mixture of retinal and 3-dehydroretinal. Light-induced isomerization of 11-cis to all-trans retinal triggers a conformational change that activates signaling via G-proteins. Subsequent receptor phosphorylation mediates displacement of the bound G-protein alpha subunit by arrestin and terminates signaling. In Poecilia reticulata (Guppy), this protein is Rhodopsin (rho).